A 216-amino-acid chain; its full sequence is Soluble inorganic pyrophosphatase 4 (216 aa).

A Phosphoserine modification is found at S18. Substrate-binding residues include K66 and R80. Y88 (proton donor) is an active-site residue. Y92 contacts substrate. Positions 102, 107, and 139 each coordinate Mg(2+). Y176 is a binding site for substrate.

The protein belongs to the PPase family. Monomer. Requires Mg(2+) as cofactor. As to expression, ubiquitous, excepted in pollen. Very low expression in cork, xylem and hypocotyls.

Its subcellular location is the cytoplasm. The enzyme catalyses diphosphate + H2O = 2 phosphate + H(+). Inhibited by Zn(2+), Ca(2+), Ba(2+), Fe(2+), Co(2+), Cu(2+), Eu(2+), Eu(3+) and Mn(2+). Its function is as follows. Catalyzes the irreversible hydrolysis of pyrophosphate (PPi) to phosphate. The MgPPi(2-) complex binds to the enzyme only after a free Mg(2+) ion has bound. No activity with glycerol-3-phosphate, glucose-6-phosphate, p-nitrophenylphosphate, ADP, NADP(+), NAD(+),NADH, NADPH or phosphoribosyl pyrophosphate as substrates. This is Soluble inorganic pyrophosphatase 4 from Arabidopsis thaliana (Mouse-ear cress).